Consider the following 509-residue polypeptide: Maturase K (509 aa).

Belongs to the intron maturase 2 family. MatK subfamily.

The protein resides in the plastid. It localises to the chloroplast. Its function is as follows. Usually encoded in the trnK tRNA gene intron. Probably assists in splicing its own and other chloroplast group II introns. The protein is Maturase K of Portulaca oleracea (Common purslane).